The following is a 322-amino-acid chain: Undecaprenyl-phosphate 4-deoxy-4-formamido-L-arabinose transferase (322 aa).

Residues Met-1–Met-235 are Cytoplasmic-facing. A helical membrane pass occupies residues Leu-236–Ile-256. The Periplasmic segment spans residues Leu-257–Gly-269. Residues Val-270–Leu-290 form a helical membrane-spanning segment. Over Leu-291–Glu-322 the chain is Cytoplasmic.

Belongs to the glycosyltransferase 2 family.

The protein resides in the cell inner membrane. The catalysed reaction is UDP-4-deoxy-4-formamido-beta-L-arabinose + di-trans,octa-cis-undecaprenyl phosphate = 4-deoxy-4-formamido-alpha-L-arabinopyranosyl di-trans,octa-cis-undecaprenyl phosphate + UDP. It participates in glycolipid biosynthesis; 4-amino-4-deoxy-alpha-L-arabinose undecaprenyl phosphate biosynthesis; 4-amino-4-deoxy-alpha-L-arabinose undecaprenyl phosphate from UDP-4-deoxy-4-formamido-beta-L-arabinose and undecaprenyl phosphate: step 1/2. Its pathway is bacterial outer membrane biogenesis; lipopolysaccharide biosynthesis. In terms of biological role, catalyzes the transfer of 4-deoxy-4-formamido-L-arabinose from UDP to undecaprenyl phosphate. The modified arabinose is attached to lipid A and is required for resistance to polymyxin and cationic antimicrobial peptides. In Escherichia coli O139:H28 (strain E24377A / ETEC), this protein is Undecaprenyl-phosphate 4-deoxy-4-formamido-L-arabinose transferase.